Here is a 551-residue protein sequence, read N- to C-terminus: MAQFVQVLAEIGDFGRFQIQLLILLCVLNFLSPFYFFAHVFMVLDEPHHCAVAWVKNHTFNLSAAEQLVLSVPLDTAGHPEPCLMFRPPPANASLQDILSHRFNETQPCDMGWEYPENRLPSLKNEFNLVCDRKHLKDTTQSVFMAGLLVGTLMFGPLCDRIGRKATILAQLLLFTLIGLATAFVPSFELYMALRFAVATAVAGLSFSNVTLLTEWVGPSWRTQAVVLAQCNFSLGQMVLAGLAYGFRNWRLLQITGTAPGLLLFFYFWALPESARWLLTRGRMDEAIQLIQKAASVNRRKLSPELMNQLVPEKTGPSGNALDLFRHPQLRKVTLIIFCVWFVDSLGYYGLSLQVGDFGLDVYLTQLIFGAVEVPARCSSIFMMQRFGRKWSQLGTLVLGGLMCIIIIFIPADLPVVVTMLAVVGKMATAAAFTISYVYSAELFPTILRQTGMGLVGIFSRIGGILTPLVILLGEYHAALPMLIYGSLPIVAGLLCTLLPETHGQGLKDTLQDLELGPHPRSPKSVPSEKETEAKGRTSSPGVAFVSSTYF.

The Cytoplasmic portion of the chain corresponds to 1–20; it reads MAQFVQVLAEIGDFGRFQIQ. Residues 21 to 41 traverse the membrane as a helical segment; that stretch reads LLILLCVLNFLSPFYFFAHVF. At 42–138 the chain is on the extracellular side; it reads MVLDEPHHCA…LVCDRKHLKD (97 aa). N-linked (GlcNAc...) asparagine glycosylation is found at N57, N61, N92, and N104. A helical membrane pass occupies residues 139–159; the sequence is TTQSVFMAGLLVGTLMFGPLC. Topologically, residues 160 to 167 are cytoplasmic; that stretch reads DRIGRKAT. A helical transmembrane segment spans residues 168 to 188; sequence ILAQLLLFTLIGLATAFVPSF. Over 189 to 195 the chain is Extracellular; it reads ELYMALR. Residues 196–216 traverse the membrane as a helical segment; that stretch reads FAVATAVAGLSFSNVTLLTEW. At 217–224 the chain is on the cytoplasmic side; it reads VGPSWRTQ. The chain crosses the membrane as a helical span at residues 225–245; that stretch reads AVVLAQCNFSLGQMVLAGLAY. Over 246–251 the chain is Extracellular; sequence GFRNWR. Residues 252 to 272 form a helical membrane-spanning segment; sequence LLQITGTAPGLLLFFYFWALP. Topologically, residues 273 to 332 are cytoplasmic; sequence ESARWLLTRGRMDEAIQLIQKAASVNRRKLSPELMNQLVPEKTGPSGNALDLFRHPQLRK. A helical membrane pass occupies residues 333–353; sequence VTLIIFCVWFVDSLGYYGLSL. A topological domain (extracellular) is located at residue Q354. The helical transmembrane segment at 355–375 threads the bilayer; sequence VGDFGLDVYLTQLIFGAVEVP. Topologically, residues 376–397 are cytoplasmic; the sequence is ARCSSIFMMQRFGRKWSQLGTL. A helical membrane pass occupies residues 398-418; sequence VLGGLMCIIIIFIPADLPVVV. Residues 419–427 lie on the Extracellular side of the membrane; that stretch reads TMLAVVGKM. A helical transmembrane segment spans residues 428–448; sequence ATAAAFTISYVYSAELFPTIL. Topologically, residues 449-452 are cytoplasmic; the sequence is RQTG. The helical transmembrane segment at 453-473 threads the bilayer; sequence MGLVGIFSRIGGILTPLVILL. Residues 474-478 lie on the Extracellular side of the membrane; sequence GEYHA. Residues 479–499 traverse the membrane as a helical segment; sequence ALPMLIYGSLPIVAGLLCTLL. Residues 500–551 are Cytoplasmic-facing; sequence PETHGQGLKDTLQDLELGPHPRSPKSVPSEKETEAKGRTSSPGVAFVSSTYF. The interval 511–551 is disordered; sequence LQDLELGPHPRSPKSVPSEKETEAKGRTSSPGVAFVSSTYF. A compositionally biased stretch (basic and acidic residues) spans 527-536; that stretch reads PSEKETEAKG. Over residues 537-551 the composition is skewed to polar residues; that stretch reads RTSSPGVAFVSSTYF.

The protein belongs to the major facilitator (TC 2.A.1) superfamily. Organic cation transporter (TC 2.A.1.19) family. Glycosylated. As to expression, ubiquitous. Highly expressed in kidneys and to a weaker extent in brain, heart, and intestine. In kidneys, expressed in proximal convoluted tubule. In kidneys, also expressed in cortical collecting duct, whereas glomerulus and thick ascending limb exhibit no expression.

Its subcellular location is the apical cell membrane. It carries out the reaction urate(out) + (S)-lactate(in) = urate(in) + (S)-lactate(out). The catalysed reaction is urate(out) + succinate(in) = urate(in) + succinate(out). The enzyme catalyses urate(out) + glutathione(in) = urate(in) + glutathione(out). It catalyses the reaction nicotinate(in) + urate(out) = nicotinate(out) + urate(in). It carries out the reaction orotate(out) + a carboxylate(in) = orotate(in) + a carboxylate(out). Anion antiporter that mediates the transport of urate, orotate and nicotinate in exchange for organic or inorganic anions. Translocates urate and orotate across the apical membrane of proximal tubule epithelial cells and involved in urate renal reabsorption. Possibly involved in orotate renal reabsorption and nicotinate intestinal reabsorption. Mediates urate uptake by an exchange with organic anions such as (S)-lactate, succinate, glutathione and nicotinate. Urate and orotate transports are Cl(-)-dependent. Shows similar transport characteristics as the urate/orotate renal antiporter SLC22A12/URAT1 and may act as a compensator of SLC22A12/URAT1 in certain conditions. This Homo sapiens (Human) protein is Solute carrier family 22 member 13.